Consider the following 451-residue polypeptide: Probable plasmid replicative DNA helicase (451 aa).

An SF4 helicase domain is found at 194-451; the sequence is QNSFFDAFPT…SKFSAIKKVW (258 aa). ATP is bound at residue 225–232; that stretch reads ARPSIGKT.

The protein belongs to the helicase family. DnaB subfamily. Homohexamer.

The catalysed reaction is Couples ATP hydrolysis with the unwinding of duplex DNA at the replication fork by translocating in the 5'-3' direction. This creates two antiparallel DNA single strands (ssDNA). The leading ssDNA polymer is the template for DNA polymerase III holoenzyme which synthesizes a continuous strand.. It catalyses the reaction ATP + H2O = ADP + phosphate + H(+). In terms of biological role, a replicative DNA helicase, it participates in initiation and elongation during DNA replication. Travels ahead of the DNA replisome, separating dsDNA into templates for DNA synthesis. A processive ATP-dependent 5'-3' DNA helicase it has DNA-dependent ATPase activity. Functionally, the plasmid this protein is encoded on is thought to be required for growth within mammalian cells. The chain is Probable plasmid replicative DNA helicase from Chlamydia trachomatis serovar L2 (strain ATCC VR-902B / DSM 19102 / 434/Bu).